The chain runs to 191 residues: GDP-mannose pyrophosphatase (191 aa).

Residues tyrosine 17, 38 to 40 (KRE), arginine 67, and 85 to 87 (AGL) contribute to the GDP-alpha-D-mannose site. The Nudix hydrolase domain maps to 43-180 (DRGNGATILL…EIRDGKTVLL (138 aa)). Residues alanine 85, glutamate 100, and glutamate 104 each contribute to the Mg(2+) site. The short motif at 86–106 (GLLDNDEPEVCIRKEAIEETG) is the Nudix box element. Residues glutamate 104, glutamate 127, 150–151 (DE), and lysine 176 contribute to the GDP-alpha-D-mannose site. Glutamate 151 lines the Mg(2+) pocket.

It belongs to the Nudix hydrolase family. NudK subfamily. As to quaternary structure, homodimer. It depends on Mg(2+) as a cofactor.

It catalyses the reaction GDP-alpha-D-mannose + H2O = alpha-D-mannose 1-phosphate + GMP + 2 H(+). In terms of biological role, nucleoside diphosphate sugar hydrolase that hydrolyzes GDP-mannose as its preferred substrate, yielding GMP and mannose-1-phosphate. The polypeptide is GDP-mannose pyrophosphatase (nudK) (Shigella dysenteriae serotype 1 (strain Sd197)).